The chain runs to 153 residues: Large ribosomal subunit protein uL15 (153 aa).

The disordered stretch occupies residues 21–41 (RGIGSGKGKTGGRGIKGQKSR). A compositionally biased stretch (gly residues) spans 23-35 (IGSGKGKTGGRGI).

It belongs to the universal ribosomal protein uL15 family. In terms of assembly, part of the 50S ribosomal subunit.

In terms of biological role, binds to the 23S rRNA. In Rickettsia africae (strain ESF-5), this protein is Large ribosomal subunit protein uL15.